Here is a 233-residue protein sequence, read N- to C-terminus: Hydroxyacylglutathione hydrolase (233 aa).

Positions 52, 54, 56, 57, 108, 125, and 163 each coordinate Zn(2+).

The protein belongs to the metallo-beta-lactamase superfamily. Glyoxalase II family. Monomer. Requires Zn(2+) as cofactor.

It catalyses the reaction an S-(2-hydroxyacyl)glutathione + H2O = a 2-hydroxy carboxylate + glutathione + H(+). The protein operates within secondary metabolite metabolism; methylglyoxal degradation; (R)-lactate from methylglyoxal: step 2/2. Its function is as follows. Thiolesterase that catalyzes the hydrolysis of S-D-lactoyl-glutathione to form glutathione and D-lactic acid. This chain is Hydroxyacylglutathione hydrolase, found in Actinobacillus succinogenes (strain ATCC 55618 / DSM 22257 / CCUG 43843 / 130Z).